We begin with the raw amino-acid sequence, 460 residues long: Wadjet protein JetA (460 aa).

Component of antiplasmid transformation system Wadjet type I, composed of JetA, JetB, JetC and JetD. Expression of Wadjet type I in B.subtilis (strain BEST7003) reduces the transformation efficiency of plasmid pHCMC05. In Bacillus cereus (strain Q1), this protein is Wadjet protein JetA.